The sequence spans 490 residues: Cysteine--tRNA ligase (490 aa).

Position 36 (Cys36) interacts with Zn(2+). Residues 38-48 (VTVYDYSHIGH) carry the 'HIGH' region motif. Cys216, His241, and Glu245 together coordinate Zn(2+). The 'KMSKS' region motif lies at 278-282 (KMSKS). Lys281 is an ATP binding site.

It belongs to the class-I aminoacyl-tRNA synthetase family. As to quaternary structure, monomer. Zn(2+) is required as a cofactor.

It is found in the cytoplasm. It catalyses the reaction tRNA(Cys) + L-cysteine + ATP = L-cysteinyl-tRNA(Cys) + AMP + diphosphate. This chain is Cysteine--tRNA ligase, found in Magnetococcus marinus (strain ATCC BAA-1437 / JCM 17883 / MC-1).